A 106-amino-acid chain; its full sequence is UPF0060 membrane protein Oant_2511 (106 aa).

4 helical membrane-spanning segments follow: residues 3–23, 30–50, 60–80, and 84–104; these read FAIYAAAALFEIAGCFAFWAW, PLWLAPGMVCLALFAYLLTLI, AAYGGIYIIASILWIWFAEGA, and RWDVVGACTAFAGTCIILFAP.

It belongs to the UPF0060 family.

Its subcellular location is the cell inner membrane. The protein is UPF0060 membrane protein Oant_2511 of Brucella anthropi (strain ATCC 49188 / DSM 6882 / CCUG 24695 / JCM 21032 / LMG 3331 / NBRC 15819 / NCTC 12168 / Alc 37) (Ochrobactrum anthropi).